The sequence spans 195 residues: MSERTGLVTRKTRETEVNVTLNLDGTGVYWVHTGMPFFDHMLQTFSKHSLFDLELTAQGDLAVDGHHTVEDAGVCLGQAIKKALGDKNGINRFGHAIVPMDDALTMAAVDLSGRGLLVFDAAMPSPRVGDFDTELVEEFFRALAVNGEFNLHIRLLAGSNTHHIIESIFKAVACSLKEAAGMSGGTGIPSTKDTL.

This sequence belongs to the imidazoleglycerol-phosphate dehydratase family.

The protein localises to the cytoplasm. It carries out the reaction D-erythro-1-(imidazol-4-yl)glycerol 3-phosphate = 3-(imidazol-4-yl)-2-oxopropyl phosphate + H2O. Its pathway is amino-acid biosynthesis; L-histidine biosynthesis; L-histidine from 5-phospho-alpha-D-ribose 1-diphosphate: step 6/9. This Pelotomaculum thermopropionicum (strain DSM 13744 / JCM 10971 / SI) protein is Imidazoleglycerol-phosphate dehydratase.